The sequence spans 1256 residues: Putative protein DDB_G0292252 (1256 aa).

Disordered stretches follow at residues 1 to 53, 145 to 243, 898 to 951, and 1069 to 1136; these read MSDD…NNNN, LLNG…SISR, EQQQ…PVET, and SHPT…ATIS. Low complexity predominate over residues 147–214; sequence NGNNSNNNSN…NGNNINTSNG (68 aa). The span at 222–243 shows a compositional bias: polar residues; the sequence is QTESTEQDFTSTSQNSTPSISR. Low complexity-rich tracts occupy residues 898–916 and 925–942; these read EQQQQQQQQQSNLNNSNNE and TTAATTTTTTTTTTTTTT. The span at 1069 to 1079 shows a compositional bias: polar residues; it reads SHPTIQSTSSP. The span at 1080 to 1136 shows a compositional bias: low complexity; that stretch reads STSSSNNNNSTTTATNNNGNNGNNNNGNGNNNNNNNNNNNNNNNNNNNNNNGPATIS.

This is Putative protein DDB_G0292252 from Dictyostelium discoideum (Social amoeba).